We begin with the raw amino-acid sequence, 491 residues long: uncharacterized protein (491 aa).

The next 12 membrane-spanning stretches (helical) occupy residues 48 to 68 (LILV…VAPC), 85 to 105 (ALIL…SAPL), 112 to 132 (RMLL…CGLA), 140 to 160 (IFRF…SGTI), 174 to 194 (AVMS…SGFI), 202 to 222 (WIFW…LPLL), 277 to 297 (PIVI…YLVL), 317 to 337 (LNYI…GIFI), 358 to 378 (VPVI…YGWT), 383 to 403 (THWI…MLGW), 408 to 428 (TYLI…ACCV), and 455 to 475 (LLAF…WFGG).

It belongs to the major facilitator superfamily.

Its subcellular location is the membrane. This is an uncharacterized protein from Schizosaccharomyces pombe (strain 972 / ATCC 24843) (Fission yeast).